The chain runs to 30 residues: Kappa-sparatoxin-Hv1d (30 aa).

3 disulfides stabilise this stretch: Cys3–Cys17, Cys10–Cys22, and Cys16–Cys26.

Expressed by the venom gland.

The protein localises to the secreted. Functionally, inhibitor of voltage-gated potassium channels of the Kv4/KCND family. Blocks calcium channels (Cav). The sequence is that of Kappa-sparatoxin-Hv1d from Heteropoda venatoria (Brown huntsman spider).